The primary structure comprises 352 residues: Fe(3+) ions import ATP-binding protein FbpC 1 (352 aa).

Residues 11 to 241 (VELKHITKRF…PASRFMASFM (231 aa)) form the ABC transporter domain. Position 43 to 50 (43 to 50 (GPSGCGKT)) interacts with ATP.

It belongs to the ABC transporter superfamily. Fe(3+) ion importer (TC 3.A.1.10) family. In terms of assembly, the complex is composed of two ATP-binding proteins (FbpC), two transmembrane proteins (FbpB) and a solute-binding protein (FbpA).

Its subcellular location is the cell inner membrane. It carries out the reaction Fe(3+)(out) + ATP + H2O = Fe(3+)(in) + ADP + phosphate + H(+). Functionally, part of the ABC transporter complex FbpABC involved in Fe(3+) ions import. Responsible for energy coupling to the transport system. The chain is Fe(3+) ions import ATP-binding protein FbpC 1 from Pectobacterium atrosepticum (strain SCRI 1043 / ATCC BAA-672) (Erwinia carotovora subsp. atroseptica).